Reading from the N-terminus, the 795-residue chain is Phenylalanine--tRNA ligase beta subunit (795 aa).

Residues 39-148 (AAKFNGVLVG…SDAPVGTDLR (110 aa)) form the tRNA-binding domain. Positions 401–476 (PKVTEVRLRR…RVYGYNSIPN (76 aa)) constitute a B5 domain. Aspartate 454, aspartate 460, glutamate 463, and glutamate 464 together coordinate Mg(2+). Residues 701 to 794 (SKFPSNRRDI…LAEQFNASLR (94 aa)) form the FDX-ACB domain.

It belongs to the phenylalanyl-tRNA synthetase beta subunit family. Type 1 subfamily. In terms of assembly, tetramer of two alpha and two beta subunits. Mg(2+) serves as cofactor.

The protein localises to the cytoplasm. It carries out the reaction tRNA(Phe) + L-phenylalanine + ATP = L-phenylalanyl-tRNA(Phe) + AMP + diphosphate + H(+). The chain is Phenylalanine--tRNA ligase beta subunit from Pseudoalteromonas translucida (strain TAC 125).